A 794-amino-acid polypeptide reads, in one-letter code: Zinc finger Y-chromosomal protein 1 (794 aa).

Positions 380–389 (TKQKLKKKRR) match the Nuclear localization signal motif. 13 C2H2-type zinc fingers span residues 411–433 (YPCMICGKKFKSRGFLKRHMKNH), 442–464 (YRCTDCDYTTNKKVSLHNHLESH), 477–499 (LECEECGKIFLHANALFAHKLTH), 508–531 (HICKFCDYETAEQGLLNRHLLAVH), 537–559 (HICVECGKGFRHPSELKKHMRTH), 565–588 (YLCQYCDYRSADSSNLKTHVKTKH), 594–616 (FKCDICLQTFTDSKDLQEHAILH), 622–645 (HQCLHCDHKSSNSSDLKRHIISVH), 651–673 (HKCEVCEKGFHRPSELKKHEAAH), 679–702 (HQCRHCEFHIADPFVLSRHILSVH), 708–730 (YRCKRCKKGFRQQIELKKHMKTH), 736–759 (YQCEYCEYNTTDASGFKRHVISIH), and 765–788 (HRCDYCKKGFRRPSEKNQHTLKHH).

This sequence belongs to the krueppel C2H2-type zinc-finger protein family. ZFX/ZFY subfamily.

The protein localises to the nucleus. In terms of biological role, probable transcriptional activator. This Xenopus laevis (African clawed frog) protein is Zinc finger Y-chromosomal protein 1 (zfy1).